The sequence spans 403 residues: DNA polymerase IV (403 aa).

Positions 23–203 (IAHMDCDAFY…KPVNILPGVG (181 aa)) constitute a UmuC domain. Residues D27 and D120 each coordinate Mg(2+). Residue E121 is part of the active site.

This sequence belongs to the DNA polymerase type-Y family. Monomer. Mg(2+) serves as cofactor.

The protein resides in the cytoplasm. The catalysed reaction is DNA(n) + a 2'-deoxyribonucleoside 5'-triphosphate = DNA(n+1) + diphosphate. In terms of biological role, poorly processive, error-prone DNA polymerase involved in untargeted mutagenesis. Copies undamaged DNA at stalled replication forks, which arise in vivo from mismatched or misaligned primer ends. These misaligned primers can be extended by PolIV. Exhibits no 3'-5' exonuclease (proofreading) activity. May be involved in translesional synthesis, in conjunction with the beta clamp from PolIII. This is DNA polymerase IV from Caulobacter vibrioides (strain ATCC 19089 / CIP 103742 / CB 15) (Caulobacter crescentus).